A 343-amino-acid polypeptide reads, in one-letter code: MESTPKKAPRSKFPALLVVALALVALVFVIWRVDSAPSTNDAYASADTIDVVPEVSGRIVELAVTDNQAVKQGDLLFRIDPRPYEANLAKAEASLAALDKQIMLTQRSVDAQQFGADSVNATVEKARAAAKQATDTLRRTEPLLKEGFVSAEDVDRARTAQRAAEADLNAVLLQAQSAASAVSGVDALVAQRAAVEADIALTKLHLEMATVRAPFDGRVISLKTSVGQFASAMRPIFTLIDTRHWYVIANFRETDLKNIRSGTPATIRLMSDSGKTFEGKVDSIGYGVLPDDGGLVLGGLPKVSRSINWVRVAQRFPVKIMVDKPDPEMFRIGASAVANLEPQ.

Residues 1 to 12 (MESTPKKAPRSK) are Cytoplasmic-facing. Residues 13–33 (FPALLVVALALVALVFVIWRV) form a helical; Signal-anchor for type II membrane protein membrane-spanning segment. Topologically, residues 34–343 (DSAPSTNDAY…ASAVANLEPQ (310 aa)) are periplasmic.

This sequence belongs to the membrane fusion protein (MFP) (TC 8.A.1) family. As to quaternary structure, could be part of a tripartite efflux system composed of MdtN, MdtO and MdtP.

Its subcellular location is the cell inner membrane. In terms of biological role, could be involved in resistance to puromycin, acriflavine and tetraphenylarsonium chloride. The sequence is that of Multidrug resistance protein MdtN (mdtN) from Escherichia coli (strain K12).